A 217-amino-acid chain; its full sequence is MGQKINPIGLRVGIIRDWEAKWYAEKDFASLLHEDLKIRKFIDNELKEASVSHVEIERAANRINIAIHTGKPGMVIGKGGSEIEKLRNKLNALTDKKVHINVIEIKKVDLDARLVAENIARQLENRASFRRVQKQAITRAMKLGAKGIKTQVSGRLGGADIARAEQYSEGTVPLHTLRADIDYAHAEADTTYGKLGVKVWIYRGEVLPTKNTSGGGK.

The KH type-2 domain maps to 38 to 106; sequence IRKFIDNELK…KVHINVIEIK (69 aa).

Belongs to the universal ribosomal protein uS3 family. As to quaternary structure, part of the 30S ribosomal subunit. Forms a tight complex with proteins S10 and S14.

Functionally, binds the lower part of the 30S subunit head. Binds mRNA in the 70S ribosome, positioning it for translation. The polypeptide is Small ribosomal subunit protein uS3 (Staphylococcus aureus (strain MSSA476)).